We begin with the raw amino-acid sequence, 268 residues long: Glucosamine-6-phosphate deaminase (268 aa).

The active-site Proton acceptor; for enolization step is the Asp-67. The active-site For ring-opening step is Asn-137. The active-site Proton acceptor; for ring-opening step is the His-139. Glu-144 (for ring-opening step) is an active-site residue.

This sequence belongs to the glucosamine/galactosamine-6-phosphate isomerase family. NagB subfamily. As to quaternary structure, homohexamer.

The catalysed reaction is alpha-D-glucosamine 6-phosphate + H2O = beta-D-fructose 6-phosphate + NH4(+). Its pathway is amino-sugar metabolism; N-acetylneuraminate degradation; D-fructose 6-phosphate from N-acetylneuraminate: step 5/5. Functionally, catalyzes the reversible isomerization-deamination of glucosamine 6-phosphate (GlcN6P) to form fructose 6-phosphate (Fru6P) and ammonium ion. The chain is Glucosamine-6-phosphate deaminase from Colwellia psychrerythraea (strain 34H / ATCC BAA-681) (Vibrio psychroerythus).